The sequence spans 253 residues: 5'/3'-nucleotidase SurE (253 aa).

Positions 8, 9, 39, and 92 each coordinate a divalent metal cation.

This sequence belongs to the SurE nucleotidase family. A divalent metal cation is required as a cofactor.

The protein resides in the cytoplasm. The enzyme catalyses a ribonucleoside 5'-phosphate + H2O = a ribonucleoside + phosphate. It carries out the reaction a ribonucleoside 3'-phosphate + H2O = a ribonucleoside + phosphate. It catalyses the reaction [phosphate](n) + H2O = [phosphate](n-1) + phosphate + H(+). Its function is as follows. Nucleotidase with a broad substrate specificity as it can dephosphorylate various ribo- and deoxyribonucleoside 5'-monophosphates and ribonucleoside 3'-monophosphates with highest affinity to 3'-AMP. Also hydrolyzes polyphosphate (exopolyphosphatase activity) with the preference for short-chain-length substrates (P20-25). Might be involved in the regulation of dNTP and NTP pools, and in the turnover of 3'-mononucleotides produced by numerous intracellular RNases (T1, T2, and F) during the degradation of various RNAs. This is 5'/3'-nucleotidase SurE from Salmonella arizonae (strain ATCC BAA-731 / CDC346-86 / RSK2980).